The primary structure comprises 369 residues: Queuine tRNA-ribosyltransferase (369 aa).

Catalysis depends on D89, which acts as the Proton acceptor. Substrate-binding positions include D89 to F93, D143, Q187, and G214. The segment at G245–D251 is RNA binding. Residue D264 is the Nucleophile of the active site. Residues T269–R273 are RNA binding; important for wobble base 34 recognition. Zn(2+) is bound by residues C302, C304, C307, and H333.

It belongs to the queuine tRNA-ribosyltransferase family. As to quaternary structure, homodimer. Within each dimer, one monomer is responsible for RNA recognition and catalysis, while the other monomer binds to the replacement base PreQ1. Zn(2+) serves as cofactor.

The enzyme catalyses 7-aminomethyl-7-carbaguanine + guanosine(34) in tRNA = 7-aminomethyl-7-carbaguanosine(34) in tRNA + guanine. The protein operates within tRNA modification; tRNA-queuosine biosynthesis. Catalyzes the base-exchange of a guanine (G) residue with the queuine precursor 7-aminomethyl-7-deazaguanine (PreQ1) at position 34 (anticodon wobble position) in tRNAs with GU(N) anticodons (tRNA-Asp, -Asn, -His and -Tyr). Catalysis occurs through a double-displacement mechanism. The nucleophile active site attacks the C1' of nucleotide 34 to detach the guanine base from the RNA, forming a covalent enzyme-RNA intermediate. The proton acceptor active site deprotonates the incoming PreQ1, allowing a nucleophilic attack on the C1' of the ribose to form the product. After dissociation, two additional enzymatic reactions on the tRNA convert PreQ1 to queuine (Q), resulting in the hypermodified nucleoside queuosine (7-(((4,5-cis-dihydroxy-2-cyclopenten-1-yl)amino)methyl)-7-deazaguanosine). This is Queuine tRNA-ribosyltransferase from Dechloromonas aromatica (strain RCB).